Consider the following 776-residue polypeptide: Transcription factor MYB3R-1 (776 aa).

Residues 1–41 form a disordered region; that stretch reads MKREMKAPTTPLESLQGDLKGKQGRTSGPARRSTKGQWTPE. 3 HTH myb-type domains span residues 30–81, 82–137, and 138–188; these read ARRS…QKVL, NPEL…NPGI, and NKNA…KKKL. 3 consecutive DNA-binding regions (H-T-H motif) follow at residues 58 to 81, 110 to 133, and 161 to 184; these read WKKIAECFKDRTDVQCLHRWQKVL, WSTISQHLPGRIGKQCRERWHNHL, and WAELMKFLPGRSDNSIKNHWNSSV. 3 disordered regions span residues 217–253, 364–384, and 401–435; these read SSWMHSNGDEGSSRPGVDAEESECSQASTVFSQSTND, FQSSVRLSDQPFLSNSDTDPE, and DNMKDSSTSSGEQGRNMVDPQNGKGSLCSQAAETH. 3 stretches are compositionally biased toward polar residues: residues 240–253, 364–380, and 423–432; these read CSQASTVFSQSTND, FQSSVRLSDQPFLSNSD, and GKGSLCSQAA. A Nuclear localization signal motif is present at residues 648–655; the sequence is KKRHRDLL.

As to quaternary structure, component of a DREAM-like complex which modulates a variety of developmentally regulated genes and of the mitotic genes in proliferating and differentiated cells. In terms of tissue distribution, expressed ubiquitously at low levels. Expressed in roots, cotyledons, flowers and leaves, especially in vascular tissues.

It localises to the nucleus. Its function is as follows. Transcription factor that binds 5'-AACGG-3' motifs in gene promoters. Transcription activator involved in the regulation of cytokinesis, probably via the activation of several G2/M phase-specific genes transcription (e.g. KNOLLE). Transcription repressor that regulates organ growth. Binds to the promoters of G2/M-specific genes and to E2F target genes to prevent their expression in post-mitotic cells and to restrict the time window of their expression in proliferating cells. Required for the maintenance of diploidy. In Arabidopsis thaliana (Mouse-ear cress), this protein is Transcription factor MYB3R-1.